The following is a 319-amino-acid chain: Sulfate adenylyltransferase subunit 2 (319 aa).

Disordered regions lie at residues 1-22 and 296-319; these read MNPG…TRRP and RGAT…EGYF.

The protein belongs to the PAPS reductase family. CysD subfamily.

The enzyme catalyses sulfate + ATP + H(+) = adenosine 5'-phosphosulfate + diphosphate. Its pathway is antibiotic biosynthesis; mitomycin C biosynthesis. In terms of biological role, with CysN forms the ATP sulfurylase (ATPS) that catalyzes the adenylation of sulfate producing adenosine 5'-phosphosulfate (APS) and diphosphate, the first enzymatic step in sulfur assimilation pathway. APS synthesis involves the formation of a high-energy phosphoric-sulfuric acid anhydride bond driven by GTP hydrolysis by CysN coupled to ATP hydrolysis by CysD. This chain is Sulfate adenylyltransferase subunit 2 (mmcV), found in Streptomyces lavendulae.